The chain runs to 465 residues: GTPase Der (465 aa).

2 EngA-type G domains span residues 3-166 (FLVA…LNEY) and 184-358 (IHFS…ACAN). Residues 9-16 (GRANVGKS), 56-60 (DTGGI), 118-121 (NKVD), 190-197 (GRPNVGKS), 237-241 (DTAGV), and 302-305 (NKWD) each bind GTP. One can recognise a KH-like domain in the interval 359–443 (KKITTADATR…PIVFEFKQSE (85 aa)). Residues 446 to 465 (FADRKNKRSKDEGSKSKKVK) form a disordered region.

Belongs to the TRAFAC class TrmE-Era-EngA-EngB-Septin-like GTPase superfamily. EngA (Der) GTPase family. In terms of assembly, associates with the 50S ribosomal subunit.

Its function is as follows. GTPase that plays an essential role in the late steps of ribosome biogenesis. The polypeptide is GTPase Der (Francisella tularensis subsp. novicida (strain U112)).